The sequence spans 841 residues: Rhomboid-like protease 5 (841 aa).

A compositionally biased stretch (low complexity) spans 1-10 (MSSKGGSSRL). The interval 1–289 (MSSKGGSSRL…GGDGGPRRHS (289 aa)) is disordered. The segment covering 11 to 51 (GSKDLKKMTSRTERELRDSGRVRGEVERVEKRLRATAKVKE) has biased composition (basic and acidic residues). The span at 95-132 (LRPASSSPRLASSSRPTESTLPSSSSRALQGASSSSSS) shows a compositional bias: low complexity. Basic and acidic residues-rich tracts occupy residues 154–163 (LRQEKKRLPE), 209–230 (RTAEKLEEGTASHRDGSRRGSV), and 243–275 (SSHEFESSPQREERMQPQETGRRELSSEPRSGD). 6 helical membrane-spanning segments follow: residues 323–343 (FLMIFLTSSVLFFVFLQELVL), 464–484 (MFRVVWGMFLHGGWMHLLLNV), 492–512 (WILEPAWGFLRTLSLWIVGGV), 526–546 (VTVGSSGAFYGLLGALVPFSI), 571–590 (FGNMVGVQGVDNNAHLGGLI), and 673–693 (FAAAVGLVTFWSVLWLYLLVP). Catalysis depends on Ser-531, which acts as the Nucleophile. The active site involves His-585.

This sequence belongs to the peptidase S54 family.

The protein resides in the membrane. The catalysed reaction is Cleaves type-1 transmembrane domains using a catalytic dyad composed of serine and histidine that are contributed by different transmembrane domains.. Serine protease involved in intramembrane proteolysis. Cleaves microneme adhesins, such as MIC2. This step is essential for efficient invasion of host cells. Catalyzes intramembrane proteolysis of AMA1. The polypeptide is Rhomboid-like protease 5 (ROM5) (Toxoplasma gondii).